The sequence spans 359 residues: Prostaglandin D2 receptor (359 aa).

Over 1-21 the chain is Extracellular; it reads MKSPFYRCQNTTSVEKGNSAV. Residue Asn10 is glycosylated (N-linked (GlcNAc...) asparagine). A helical membrane pass occupies residues 22 to 42; that stretch reads MGGVLFSTGLLGNLLALGLLA. The Cytoplasmic segment spans residues 43 to 59; the sequence is RSGLGWCSRRPLRPLPS. The helical transmembrane segment at 60–80 threads the bilayer; that stretch reads VFYMLVCGLTVTDLLGKCLLS. The Extracellular portion of the chain corresponds to 81–107; sequence PVVLAAYAQNRSLRVLAPALDNSLCQA. Residue Asn90 is glycosylated (N-linked (GlcNAc...) asparagine). Cys105 and Cys183 form a disulfide bridge. The chain crosses the membrane as a helical span at residues 108–128; that stretch reads FAFFMSFFGLSSTLQLLAMAL. The Cytoplasmic portion of the chain corresponds to 129-150; the sequence is ECWLSLGHPFFYRRHITLRLGA. A helical transmembrane segment spans residues 151–171; sequence LVAPVVSAFSLAFCALPFMGF. Residues 172–195 lie on the Extracellular side of the membrane; it reads GKFVQYCPGTWCFIQMVHEEGSLS. The helical transmembrane segment at 196–216 threads the bilayer; sequence VLGYSVLYSSLMALLVLATVL. The Cytoplasmic portion of the chain corresponds to 217–262; that stretch reads CNLGAMRNLYAMHRRLQRHPRSCTRDCAEPRADGREASPQPLEELD. Residues 263-283 traverse the membrane as a helical segment; sequence HLLLLALMTVLFTMCSLPVIY. At 284 to 310 the chain is on the extracellular side; that stretch reads RAYYGAFKDVKEKNRTSEEAEDLRALR. N-linked (GlcNAc...) asparagine glycosylation is present at Asn297. The chain crosses the membrane as a helical span at residues 311–331; that stretch reads FLSVISIVDPWIFIIFRSPVF. Over 332–359 the chain is Cytoplasmic; the sequence is RIFFHKIFIRPLRYRSRCSNSTNMESSL.

This sequence belongs to the G-protein coupled receptor 1 family. In terms of tissue distribution, expressed in retinal choroid, ciliary epithelium, longitudinal and circular ciliary muscles, iris, small intestine and platelet membranes.

The protein resides in the cell membrane. Functionally, receptor for prostaglandin D2 (PGD2). The activity of this receptor is mainly mediated by G(s) proteins that stimulate adenylate cyclase, resulting in an elevation of intracellular cAMP. A mobilization of calcium is also observed, but without formation of inositol 1,4,5-trisphosphate. Involved in PLA2G3-dependent maturation of mast cells. PLA2G3 is secreted by immature mast cells and acts on nearby fibroblasts upstream to PTDGS to synthesize PGD2, which in turn promotes mast cell maturation and degranulation via PTGDR. In Homo sapiens (Human), this protein is Prostaglandin D2 receptor (PTGDR).